The sequence spans 178 residues: ATP-dependent protease subunit HslV (178 aa).

Residue Thr7 is part of the active site. Residues Gly162, Cys165, and Thr168 each coordinate Na(+).

It belongs to the peptidase T1B family. HslV subfamily. A double ring-shaped homohexamer of HslV is capped on each side by a ring-shaped HslU homohexamer. The assembly of the HslU/HslV complex is dependent on binding of ATP.

The protein localises to the cytoplasm. The enzyme catalyses ATP-dependent cleavage of peptide bonds with broad specificity.. Its activity is regulated as follows. Allosterically activated by HslU binding. Its function is as follows. Protease subunit of a proteasome-like degradation complex believed to be a general protein degrading machinery. The chain is ATP-dependent protease subunit HslV from Burkholderia orbicola (strain AU 1054).